A 225-amino-acid polypeptide reads, in one-letter code: Cytidylate kinase (225 aa).

An ATP-binding site is contributed by 11 to 19; the sequence is GPAAAGKST.

This sequence belongs to the cytidylate kinase family. Type 1 subfamily.

The protein localises to the cytoplasm. It catalyses the reaction CMP + ATP = CDP + ADP. It carries out the reaction dCMP + ATP = dCDP + ADP. The protein is Cytidylate kinase of Bacillus cytotoxicus (strain DSM 22905 / CIP 110041 / 391-98 / NVH 391-98).